Consider the following 467-residue polypeptide: Cytochrome P450 76A1 (467 aa).

Cysteine 410 is a binding site for heme.

This sequence belongs to the cytochrome P450 family. Heme serves as cofactor.

This is Cytochrome P450 76A1 (CYP76A1) from Solanum melongena (Eggplant).